Reading from the N-terminus, the 421-residue chain is 3-isopropylmalate dehydratase large subunit (421 aa).

The [4Fe-4S] cluster site is built by C302, C362, and C365.

It belongs to the aconitase/IPM isomerase family. LeuC type 2 subfamily. Heterodimer of LeuC and LeuD. Requires [4Fe-4S] cluster as cofactor.

The catalysed reaction is (2R,3S)-3-isopropylmalate = (2S)-2-isopropylmalate. Its pathway is amino-acid biosynthesis; L-leucine biosynthesis; L-leucine from 3-methyl-2-oxobutanoate: step 2/4. Catalyzes the isomerization between 2-isopropylmalate and 3-isopropylmalate, via the formation of 2-isopropylmaleate. The protein is 3-isopropylmalate dehydratase large subunit of Nitratiruptor sp. (strain SB155-2).